A 109-amino-acid polypeptide reads, in one-letter code: MTTSATVIIMVLCVGSLVIFSEGSIGFELVTPLPGKPDECPVEDGRTLAIGQTEQVPGQCEERTCIKMDDQLYFELAGCGISEAGPGCEMFESKAETYPECCTPEIKCN.

An N-terminal signal peptide occupies residues 1–23 (MTTSATVIIMVLCVGSLVIFSEG).

Post-translationally, contains 4 disulfide bonds. As to expression, expressed by the venom gland.

It is found in the secreted. The sequence is that of U-scoloptoxin(16)-Ssd1a from Scolopendra dehaani (Thai centipede).